The primary structure comprises 496 residues: Cytochrome c-552 (496 aa).

The N-terminal stretch at 1–23 (MKKYKFLFAISIIAIGLMTVLLA) is a signal peptide. A heme c-binding site is contributed by H100. 3 residues coordinate heme: C128, C131, and K132. C166, C169, H170, C210, C213, and H214 together coordinate heme c. Residues E216, Y217, K269, and Q271 each coordinate Ca(2+). Position 217 (Y217) interacts with substrate. H272 serves as a coordination point for substrate. Heme c is bound by residues H283, C290, C293, H294, H308, C321, C324, H325, and H400.

This sequence belongs to the cytochrome c-552 family. The cofactor is Ca(2+). Heme c serves as cofactor.

It is found in the periplasm. It carries out the reaction 6 Fe(III)-[cytochrome c] + NH4(+) + 2 H2O = 6 Fe(II)-[cytochrome c] + nitrite + 8 H(+). Its pathway is nitrogen metabolism; nitrate reduction (assimilation). Its function is as follows. Catalyzes the reduction of nitrite to ammonia, consuming six electrons in the process. The protein is Cytochrome c-552 of Aliarcobacter butzleri (strain RM4018) (Arcobacter butzleri).